Reading from the N-terminus, the 342-residue chain is Phosphate acyltransferase (342 aa).

This sequence belongs to the PlsX family. As to quaternary structure, homodimer. Probably interacts with PlsY.

The protein resides in the cytoplasm. The catalysed reaction is a fatty acyl-[ACP] + phosphate = an acyl phosphate + holo-[ACP]. It participates in lipid metabolism; phospholipid metabolism. Functionally, catalyzes the reversible formation of acyl-phosphate (acyl-PO(4)) from acyl-[acyl-carrier-protein] (acyl-ACP). This enzyme utilizes acyl-ACP as fatty acyl donor, but not acyl-CoA. The sequence is that of Phosphate acyltransferase from Trichormus variabilis (strain ATCC 29413 / PCC 7937) (Anabaena variabilis).